Here is a 497-residue protein sequence, read N- to C-terminus: Probable FAD-binding monooxygenase AlmA (497 aa).

The helical transmembrane segment at 4-24 threads the bilayer; sequence QVDVLIIGAGISGIGLAVHLS. FAD-binding residues include Ser15, Glu36, Asp56, Phe62, and Val104. 54 to 56 provides a ligand contact to NADP(+); sequence RSD. Residues 184–190, 208–209, and 292–293 each bind NADP(+); these read SGATAIT, RS, and RL. Residue Val395 participates in FAD binding.

Belongs to the FAD-binding monooxygenase family. The cofactor is FAD.

Its subcellular location is the cell membrane. Its pathway is hydrocarbon metabolism; alkane degradation. In terms of biological role, is involved in the degradation of n-alkanes with C chain lengths of 32 and longer. Allows Acinetobacter sp. strain DSM 17874 to grow on long-chain n-alkanes such as dotriacontane (C32H66) or hexatriacontane (C36H74) as a sole carbon source. The chain is Probable FAD-binding monooxygenase AlmA from Acinetobacter sp.